Reading from the N-terminus, the 108-residue chain is Tubulin-specific chaperone A (108 aa).

A2 is modified (N-acetylalanine).

This sequence belongs to the TBCA family. In terms of assembly, supercomplex made of cofactors A to E. Cofactors A and D function by capturing and stabilizing tubulin in a quasi-native conformation. Cofactor E binds to the cofactor D-tubulin complex; interaction with cofactor C then causes the release of tubulin polypeptides that are committed to the native state.

The protein resides in the cytoplasm. It is found in the cytoskeleton. Tubulin-folding protein; involved in the early step of the tubulin folding pathway. The polypeptide is Tubulin-specific chaperone A (TBCA) (Homo sapiens (Human)).